The sequence spans 220 residues: uncharacterized protein (220 aa).

A disordered region spans residues 1 to 50 (MTDDVRDVNTETTDATEVAEIDSAAGEAGDSATEAFDTDSATESTAQKGQ). The span at 39 to 48 (DSATESTAQK) shows a compositional bias: polar residues. Residues 65-85 (VPVILILLMLISGGATGWLYL) traverse the membrane as a helical segment.

It to M.tuberculosis Rv1363c.

The protein localises to the membrane. This is an uncharacterized protein from Mycobacterium tuberculosis (strain CDC 1551 / Oshkosh).